The following is an 84-amino-acid chain: Small ribosomal subunit protein bS16c (84 aa).

It belongs to the bacterial ribosomal protein bS16 family.

The protein resides in the plastid. The protein localises to the chloroplast. This is Small ribosomal subunit protein bS16c from Anthoceros angustus (Hornwort).